The primary structure comprises 749 residues: Probable serine/threonine-protein kinase fhkD (749 aa).

The FHA domain occupies 47–150; sequence IFFGRNPKRC…NGTFVKGCIL (104 aa). Low complexity predominate over residues 84 to 126; that stretch reads NNNNNDGDNNNNNNNNNNNNNNNNNNNNNNNNNNNNNNNNNNN. The disordered stretch occupies residues 84-130; sequence NNNNNDGDNNNNNNNNNNNNNNNNNNNNNNNNNNNNNNNNNNNTTKN. A Protein kinase domain is found at 199–472; the sequence is YSIQGILGTG…TKGALSHDWF (274 aa). ATP-binding positions include 205–213 and Lys-228; that span reads LGTGNFSVV. Asp-323 (proton acceptor) is an active-site residue. 2 disordered regions span residues 512-620 and 640-749; these read NIPM…PAII and CTPT…LKGS. Residues 516-561 show a composition bias toward low complexity; it reads TLNSTTTNTTSPNNNNNNNNNNNNKNNNKNIIKSLNSNSNNYNNNS. Positions 562–572 are enriched in polar residues; the sequence is VLKKTSQSPKT. Composition is skewed to low complexity over residues 590–611 and 651–667; these read NNNN…NNNN and TNST…TSNS. The span at 668-687 shows a compositional bias: polar residues; it reads VTMGTSSTSIPVSNSITMKS. Residues 696-707 show a composition bias toward basic and acidic residues; it reads DGDKKRKEKESS. Residues 708–739 show a composition bias toward low complexity; the sequence is SSENVNDVIVINSNNHNNNNNNNHNINNGISS.

The protein belongs to the protein kinase superfamily. CAMK Ser/Thr protein kinase family. CHK2 subfamily.

The catalysed reaction is L-seryl-[protein] + ATP = O-phospho-L-seryl-[protein] + ADP + H(+). It catalyses the reaction L-threonyl-[protein] + ATP = O-phospho-L-threonyl-[protein] + ADP + H(+). In Dictyostelium discoideum (Social amoeba), this protein is Probable serine/threonine-protein kinase fhkD (fhkD).